Here is a 557-residue protein sequence, read N- to C-terminus: MQVTQEKRPGSRVGLKIVVEADQVKRSYEKTLRQLERNIQIPGFRKGKAPRNLVIRQVGRERVMASAVDDLINEAIQQALKDTQLHPISRFELDDKVEQLLDRFNPEADFSFSGYVEVYPEARVGQYKGLTVTATRVTVKPEQIDQLIDRWRDQRATLLPVEDRPAQLGDVVVIDFQARDAEGNPLEEIAAQDFQLELKEENFIPGFVAGVVGMQLDQTKEITATFPDDYFRKELAGKTVTFTVCLKEIKTKELPELDDAFVQEISEFQTVAELREHLQKRLEQDALRQSEENLETAILNAILETTEVDLPETLVEQETTQLLARSLQSLQQQQGVTPGEIRKFLSQLPPETLNQLMERHRPEAINRLRRTLALSAIVRQEQIAVGPNELEVEVEEVMAAYAQQGQKLDRERVRQAVHEDLLANKVMAWLKSQTTVNWVDSEGNPTEPPTLSPRSEGEDRQERSESARAGVPETEFEAEKPEGSAIPEAVEPPVDAKAEGEVATEPQAALPSVEAEASGIPEAVEPSAEAATDPAGLQLEQAVAETPKAGKKSKKDK.

In terms of domain architecture, PPIase FKBP-type spans 169 to 255 (GDVVVIDFQA…LKEIKTKELP (87 aa)). The segment at 438–557 (WVDSEGNPTE…KAGKKSKKDK (120 aa)) is disordered. The span at 455 to 466 (SEGEDRQERSES) shows a compositional bias: basic and acidic residues.

It belongs to the FKBP-type PPIase family. Tig subfamily.

The protein resides in the cytoplasm. The enzyme catalyses [protein]-peptidylproline (omega=180) = [protein]-peptidylproline (omega=0). Involved in protein export. Acts as a chaperone by maintaining the newly synthesized protein in an open conformation. Functions as a peptidyl-prolyl cis-trans isomerase. The protein is Trigger factor of Synechococcus sp. (strain JA-3-3Ab) (Cyanobacteria bacterium Yellowstone A-Prime).